The sequence spans 1120 residues: Terminal uridylyltransferase 1 (1120 aa).

Disordered regions lie at residues 1–156 and 196–221; these read MSKY…SAVE and AALI…PHTP. The span at 7–16 shows a compositional bias: polar residues; the sequence is LFNQGTKDGT. Over residues 17–59 the composition is skewed to low complexity; the sequence is NASSGSEANSANITSSSAPASSTNTSSPTSSESAVVSPPASTS. Residues 60 to 70 are compositionally biased toward basic residues; that stretch reads PRRRLIHRRHG. Positions 90-103 are enriched in basic and acidic residues; the sequence is NEEKHENFISDSVH. A compositionally biased stretch (polar residues) spans 118 to 128; sequence LTTSGSETVMS. Composition is skewed to low complexity over residues 134 to 154 and 207 to 217; these read AFEA…STSA and SSAVSSSSSGS. The C2H2-type; atypical zinc-finger motif lies at 222-253; that stretch reads PRLFTCDMCLQYVSTSYEALEQHALDQHGDAL. Residues cysteine 227, cysteine 230, histidine 244, and histidine 249 each contribute to the Zn(2+) site. UTP-binding positions include serine 330 and 341-344; that span reads SDID. Residues aspartate 342 and aspartate 344 each coordinate Mg(2+). Arginine 390 provides a ligand contact to RNA. Aspartate 548 serves as a coordination point for Mg(2+). Residues 555 to 559, lysine 580, lysine 584, and 598 to 599 each bind UTP; these read GIRNS and SY. The PAP-associated domain maps to 659–697; sequence GELLLGFFYYYAFEFDWVNHVVSLNRPGITTKASLGWDV. The tract at residues 750 to 1120 is important for catalytic activity and RNA binding; the sequence is GMMASSASAA…ARRVLRLLFR (371 aa). Positions 773-782 match the Nucleotide recognition motif (NRM) motif; that stretch reads IEDPYEENLN. The involved in oligomerization stretch occupies residues 800-900; sequence YRGLLSLLKD…LLSDLEAAFL (101 aa). The tract at residues 1047–1076 is disordered; it reads PSTTTQGEDPLASGTCEQGGVSPSLPTGAP.

Belongs to the DNA polymerase type-B-like family. In terms of assembly, homotetramer. Part of a 700kDa complex. Interacts with p45 and p50 RNA ligases. Mg(2+) is required as a cofactor. It depends on Mn(2+) as a cofactor.

It localises to the mitochondrion. It catalyses the reaction RNA(n) + UTP = RNA(n)-3'-uridine ribonucleotide + diphosphate. With respect to regulation, zinc-binding is required for catalytic activity. Functionally, terminal uridylyltransferase which is involved in the post-transcriptional editing of mitochondrial RNA, a process involving the addition and deletion of uridine (U) nucleotides in the pre-mRNA. Specifically, catalyzes the addition of Us to the 3'-hydroxyl group of guided RNA (gRNA), with a preference for RNAs terminating in 6 Us, but also can add Us to RNAs terminating in 6 adenines (A), 6 cytosines (C), or 6 guanines (G). Can mediate RNA-independent UTP polymerization in vitro. Can mediate pyrophosphate-dependent degradation of synthetic RNA ending with U residues in vitro. This Leishmania tarentolae (Sauroleishmania tarentolae) protein is Terminal uridylyltransferase 1.